The primary structure comprises 132 residues: Large ribosomal subunit protein bL17 (132 aa).

Belongs to the bacterial ribosomal protein bL17 family. In terms of assembly, part of the 50S ribosomal subunit. Contacts protein L32.

The chain is Large ribosomal subunit protein bL17 from Marinobacter nauticus (strain ATCC 700491 / DSM 11845 / VT8) (Marinobacter aquaeolei).